Here is a 207-residue protein sequence, read N- to C-terminus: LexA repressor (207 aa).

The H-T-H motif DNA-binding region spans 28-48; sequence VREIGEAVGLASSSTVHGHLA. Active-site for autocatalytic cleavage activity residues include serine 129 and lysine 167.

It belongs to the peptidase S24 family. As to quaternary structure, homodimer.

It carries out the reaction Hydrolysis of Ala-|-Gly bond in repressor LexA.. Functionally, represses a number of genes involved in the response to DNA damage (SOS response), including recA and lexA. In the presence of single-stranded DNA, RecA interacts with LexA causing an autocatalytic cleavage which disrupts the DNA-binding part of LexA, leading to derepression of the SOS regulon and eventually DNA repair. In Geobacillus sp. (strain WCH70), this protein is LexA repressor.